The sequence spans 776 residues: Reticulon-1 (776 aa).

Disordered stretches follow at residues 1-103, 136-168, 204-244, and 285-580; these read MAAP…GEGS, ISESPEELGTPGSSLPDVPGIESRGLFSSDSGI, EVKH…EPAP, and LTEI…APPP. Over residues 204 to 240 the composition is skewed to basic and acidic residues; the sequence is EVKHQEQNHPELEDKDLDFKNKDTDISIKPEGVREPD. Phosphoserine is present on serine 327. A compositionally biased stretch (low complexity) spans 328–341; it reads PGSITPPSSGTEPS. Residues serine 350, serine 352, and serine 487 each carry the phosphoserine modification. Residues 497-511 show a composition bias toward basic and acidic residues; that stretch reads AIREETGVRAEERAP. The Reticulon domain maps to 589-776; that stretch reads AIDLLYWRDI…KIPGAKRHAE (188 aa). 2 helical membrane passes run 603–623 and 705–725; these read IVFGSFLLLLFSLTQFSVVSV and FAVLMWLLTYVGALFNGLTLL.

As to quaternary structure, interacts with NDRG1. Interacts with BACE1. Interacts with TMEM33. Post-translationally, phosphorylated.

The protein resides in the endoplasmic reticulum membrane. The protein localises to the golgi apparatus membrane. In terms of biological role, inhibits amyloid precursor protein processing, probably by blocking BACE1 activity. This chain is Reticulon-1 (RTN1), found in Pan troglodytes (Chimpanzee).